Here is a 501-residue protein sequence, read N- to C-terminus: Aluminum-activated malate transporter 2 (501 aa).

6 consecutive transmembrane segments (helical) span residues 22-42, 52-72, 78-98, 101-121, 130-150, and 166-186; these read VVHA…YYYQ, AMWA…ATLG, AVAT…ASLS, TVEP…STFV, RYDY…VSGF, and VIMG…VWAG. The segment at 398 to 425 is disordered; that stretch reads FKNKKKPSKSNSGSIGQAMPNKSHDDDD.

It belongs to the aromatic acid exporter (TC 2.A.85) family.

It is found in the membrane. Its function is as follows. Malate transporter. This chain is Aluminum-activated malate transporter 2 (ALMT2), found in Arabidopsis thaliana (Mouse-ear cress).